The primary structure comprises 147 residues: Mineralocorticoid receptor (147 aa).

One can recognise an NR LBD domain in the interval 1–147; sequence FALSWRSYKH…SQALKVEFPA (147 aa). Positions 6 and 134 each coordinate 21-hydroxyprogesterone. Arg-6 and Thr-134 together coordinate aldosterone. Positions 6 and 134 each coordinate progesterone.

Belongs to the nuclear hormone receptor family. NR3 subfamily.

The protein resides in the cytoplasm. The protein localises to the nucleus. Functionally, receptor for both mineralocorticoids (MC) such as aldosterone and glucocorticoids (GC) such as corticosterone or cortisol. Binds to mineralocorticoid response elements (MRE) and transactivates target genes. The effect of MC is to increase ion and water transport and thus raise extracellular fluid volume and blood pressure and lower potassium levels. The protein is Mineralocorticoid receptor (NR3C2) of Gallus gallus (Chicken).